The primary structure comprises 270 residues: uncharacterized protein (270 aa).

Positions 235-270 are disordered; that stretch reads LADSDLEADSDDSESFEFVENPEPSENGSEPTIKND. Positions 238 to 251 are enriched in acidic residues; that stretch reads SDLEADSDDSESFE. The segment covering 255–270 has biased composition (low complexity); that stretch reads NPEPSENGSEPTIKND.

This is an uncharacterized protein from Halorubrum sp. PV6 (HRPV-1).